The sequence spans 722 residues: uncharacterized protein (722 aa).

This is an uncharacterized protein from Treponema pallidum (strain Nichols).